A 140-amino-acid polypeptide reads, in one-letter code: Large ribosomal subunit protein bL17 (140 aa).

The protein belongs to the bacterial ribosomal protein bL17 family. Part of the 50S ribosomal subunit. Contacts protein L32.

In Rhizobium etli (strain ATCC 51251 / DSM 11541 / JCM 21823 / NBRC 15573 / CFN 42), this protein is Large ribosomal subunit protein bL17.